The sequence spans 961 residues: E4 ubiquitin-protein ligase UFD2 (961 aa).

In terms of domain architecture, U-box spans Asp880–Glu954.

Belongs to the ubiquitin conjugation factor E4 family. As to quaternary structure, interacts with CDC48. Interacts with the ubiquitin-like domain of RAD23 and DSK2. Interacts with PEX29.

The protein resides in the cytoplasm. It is found in the nucleus. The enzyme catalyses S-ubiquitinyl-[E2 ubiquitin-conjugating enzyme]-L-cysteine + [acceptor protein]-L-lysine = [E2 ubiquitin-conjugating enzyme]-L-cysteine + N(6)-ubiquitinyl-[acceptor protein]-L-lysine.. The protein operates within protein modification; protein ubiquitination. E4 ubiquitin chain-elongation enzyme specifically involved in polyubiquitin chain assembly. Binds to CDC48 and elongates mono- and diubiquitinated ERAD substrates presented by the UFD1-NPL4-CDC48/p97 (UNC) AAA ATPase complex to a chain length of 4 to 6 ubiquitin moieties. Delivers these polyubiquitinated substrates to RAD23 and DSK2, which target them to the proteasome. Has E3 ubiquitin-protein ligase activity, accepting ubiquitin from its cognate E2 ubiquitin-conjugating enzyme UBC4. Enhances ubiquitination at 'Lys-48', but not at 'Lys-29' of the Ub moiety. Promotes ubiquitin chain elongation at 'Lys-48' on the DOA10 substrate PEX29. Also involved in the proteolytic processing of the ER-bound transcription factor SPT23. This Saccharomyces cerevisiae (strain ATCC 204508 / S288c) (Baker's yeast) protein is E4 ubiquitin-protein ligase UFD2 (UFD2).